A 578-amino-acid chain; its full sequence is Frizzled and smoothened-like protein Q (578 aa).

The N-terminal stretch at 1 to 23 is a signal peptide; sequence MKNSFLINILIIYYLFIILFVNS. Topologically, residues 24–233 are extracellular; sequence QDLKLGGSCE…GKTKILDRTN (210 aa). The region spanning 27–157 is the FZ domain; that stretch reads KLGGSCELID…GAPMFPINST (131 aa). Disulfide bonds link C32–C95, C41–C88, C79–C128, and C121–C141. N46, N64, N99, and N104 each carry an N-linked (GlcNAc...) asparagine glycan. 4 N-linked (GlcNAc...) asparagine glycosylation sites follow: N144, N155, N181, and N233. The helical transmembrane segment at 234–254 threads the bilayer; that stretch reads YTLTSISFITCIFMILTFGVL. At 255-261 the chain is on the cytoplasmic side; that stretch reads PNKITHR. The chain crosses the membrane as a helical span at residues 262–282; that stretch reads MESILSFACGGCITALSLFIQ. Topologically, residues 283–305 are extracellular; sequence SRQDNFNCSSDPGRFKSQSDYLC. The N-linked (GlcNAc...) asparagine glycan is linked to N289. Residues 306-326 form a helical membrane-spanning segment; the sequence is LLTGLIFQFGAITSIFWSPMI. Over 327–341 the chain is Cytoplasmic; sequence AYDFYITSTLGKIRK. The chain crosses the membrane as a helical span at residues 342-362; that stretch reads FGLYRIVLWSFIFVLTALPAF. Topologically, residues 363–388 are extracellular; the sequence is GGKYSATVATNCWINSDDGSAWQYVS. The chain crosses the membrane as a helical span at residues 389–409; that stretch reads FYIPSWCAMGLICLFSILSVI. Residues 410–422 are Cytoplasmic-facing; that stretch reads NVSKMYIQTPNNR. A helical membrane pass occupies residues 423-443; it reads ILFFNIKILITLLLFLFVLTF. The Extracellular segment spans residues 444–490; it reads ASSLKFYMEERMDTYFDAIAVWVECIGKGDPSQCELHAPGYDLKALN. The chain crosses the membrane as a helical span at residues 491–511; it reads IVVIGILGFTVFIGYGLDPIV. Over 512–578 the chain is Cytoplasmic; that stretch reads IHIWMESKKF…LKSTEINQQP (67 aa). Positions 544 to 556 are enriched in low complexity; sequence NNNNNETASTSSG. Positions 544 to 578 are disordered; that stretch reads NNNNNETASTSSGNERKQTTVKMSNLKSTEINQQP. Residues 563–578 are compositionally biased toward polar residues; that stretch reads TVKMSNLKSTEINQQP.

This sequence belongs to the G-protein coupled receptor Fz/Smo family.

Its subcellular location is the membrane. This is Frizzled and smoothened-like protein Q (fslQ) from Dictyostelium discoideum (Social amoeba).